The sequence spans 351 residues: Leukotriene B4 receptor 1 (351 aa).

Residues 1–21 (MAANTTSTAATSSPGGMSLSL) are Extracellular-facing. Asparagine 4 is a glycosylation site (N-linked (GlcNAc...) asparagine). A helical membrane pass occupies residues 22 to 44 (LPIVLLSVALVVGLPGNSFVVWS). Residues 45–56 (ILKRMQKRSVTA) lie on the Cytoplasmic side of the membrane. The helical transmembrane segment at 57 to 77 (LLVLNLALADLAVLLTAPFFL) threads the bilayer. The Extracellular portion of the chain corresponds to 78-93 (HFLARGTWSFEVTGCR). Residues 94–115 (LCHYVCGVSMYASVLLITIMSL) traverse the membrane as a helical segment. At 116–140 (DRSLAVARPFVSQKVRTKAFARWVL) the chain is on the cytoplasmic side. A helical transmembrane segment spans residues 141-161 (AGIWVVSFLLAIPVLVYRTVT). The Extracellular portion of the chain corresponds to 162 to 179 (PKNKTLICDSRYPSDGHK). N-linked (GlcNAc...) asparagine glycosylation is present at asparagine 164. Residues 180–200 (VFHLLFEAITGFLLPFLAVVA) traverse the membrane as a helical segment. Residues 201-222 (SYSDIGRRLQARRFRRSRRTGR) are Cytoplasmic-facing. Residues 223 to 243 (LVVLIILAFAAFWLPYHLVNL) form a helical membrane-spanning segment. Residues 244-268 (VEAGRTLAGWDKNSPAGQRLKLARY) lie on the Extracellular side of the membrane. Residues 269 to 289 (VLIALAFLSSSVNPVLYACAG) form a helical membrane-spanning segment. Topologically, residues 290 to 351 (GGLLRSAGVG…TSSTPPESSK (62 aa)) are cytoplasmic. 2 stretches are compositionally biased toward polar residues: residues 311–327 (EVSSTRRGGTLVQTPKA) and 339–351 (SFMTSSTPPESSK). The disordered stretch occupies residues 311–351 (EVSSTRRGGTLVQTPKATPTCPEPGPTDSFMTSSTPPESSK).

It belongs to the G-protein coupled receptor 1 family. Phosphorylated by GRK6 upon leukotriene B4 binding; which promotes desensitization. In terms of tissue distribution, exclusively expressed in polymorphonuclear leukocytes.

The protein localises to the cell membrane. Receptor for leukotriene B4, a potent chemoattractant involved in inflammation and immune response. The chain is Leukotriene B4 receptor 1 (Ltb4r) from Rattus norvegicus (Rat).